Here is a 499-residue protein sequence, read N- to C-terminus: Cysteine--tRNA ligase (499 aa).

C31 lines the Zn(2+) pocket. Positions 33–43 (VTVYDLCHLGH) match the 'HIGH' region motif. Positions 215, 240, and 244 each coordinate Zn(2+). The 'KMSKS' region signature appears at 272-276 (KMSKS). K275 is an ATP binding site.

It belongs to the class-I aminoacyl-tRNA synthetase family. As to quaternary structure, monomer. It depends on Zn(2+) as a cofactor.

Its subcellular location is the cytoplasm. The catalysed reaction is tRNA(Cys) + L-cysteine + ATP = L-cysteinyl-tRNA(Cys) + AMP + diphosphate. The polypeptide is Cysteine--tRNA ligase (Synechococcus sp. (strain WH7803)).